The primary structure comprises 255 residues: Glutamate racemase (255 aa).

Substrate-binding positions include 7–8 (DS) and 39–40 (YG). Cys-70 (proton donor/acceptor) is an active-site residue. 71–72 (NT) lines the substrate pocket. Cys-181 (proton donor/acceptor) is an active-site residue. 182 to 183 (TH) serves as a coordination point for substrate.

The protein belongs to the aspartate/glutamate racemases family.

It catalyses the reaction L-glutamate = D-glutamate. It functions in the pathway cell wall biogenesis; peptidoglycan biosynthesis. Its function is as follows. Provides the (R)-glutamate required for cell wall biosynthesis. This Helicobacter pylori (strain ATCC 700392 / 26695) (Campylobacter pylori) protein is Glutamate racemase.